The sequence spans 91 residues: Probable Fe(2+)-trafficking protein (91 aa).

This sequence belongs to the Fe(2+)-trafficking protein family. As to quaternary structure, monomer.

Its function is as follows. Could be a mediator in iron transactions between iron acquisition and iron-requiring processes, such as synthesis and/or repair of Fe-S clusters in biosynthetic enzymes. This Citrobacter koseri (strain ATCC BAA-895 / CDC 4225-83 / SGSC4696) protein is Probable Fe(2+)-trafficking protein.